The following is a 113-amino-acid chain: Hydrogenase maturation factor HypA (113 aa).

Histidine 2 serves as a coordination point for Ni(2+). The Zn(2+) site is built by cysteine 73, cysteine 76, cysteine 89, and cysteine 92.

This sequence belongs to the HypA/HybF family.

Functionally, involved in the maturation of [NiFe] hydrogenases. Required for nickel insertion into the metal center of the hydrogenase. The protein is Hydrogenase maturation factor HypA of Xanthobacter autotrophicus (strain ATCC BAA-1158 / Py2).